Reading from the N-terminus, the 368-residue chain is Galanin receptor type 3 (368 aa).

At 1 to 20 (MADAQNISLDSPGSVGAVAV) the chain is on the extracellular side. A glycan (N-linked (GlcNAc...) asparagine) is linked at asparagine 6. Residues 21 to 41 (PVVFALIFLLGTVGNGLVLAV) traverse the membrane as a helical segment. Topologically, residues 42-57 (LLQPGPSAWQEPGSTT) are cytoplasmic. A helical transmembrane segment spans residues 58 to 78 (DLFILNLAVADLCFILCCVPF). The Extracellular segment spans residues 79–96 (QATIYTLDAWLFGALVCK). An intrachain disulfide couples cysteine 95 to cysteine 172. Residues 97 to 118 (AVHLLIYLTMYASSFTLAAVSV) form a helical membrane-spanning segment. The Cytoplasmic segment spans residues 119–138 (DRYLAVRHPLRSRALRTPRN). A helical membrane pass occupies residues 139 to 159 (ARAAVGLVWLLAALFSAPYLS). Residues 160 to 184 (YYGTVRYGALELCVPAWEDARRRAL) are Extracellular-facing. Residues 185-205 (DVATFAAGYLLPVAVVSLAYG) form a helical membrane-spanning segment. At 206-236 (RTLRFLWAAVGPAGAAAAEARRRATGRAGRA) the chain is on the cytoplasmic side. Residues 237 to 257 (MLAVAALYALCWGPHHALILC) form a helical membrane-spanning segment. Topologically, residues 258-259 (FW) are extracellular. Residues 260–280 (YGRFAFSPATYACRLASHCLA) form a helical membrane-spanning segment. Residues 281 to 368 (YANSCLNPLV…HGGEAARGPE (88 aa)) lie on the Cytoplasmic side of the membrane. A lipid anchor (S-palmitoyl cysteine) is attached at cysteine 308. A disordered region spans residues 317 to 368 (RRALRRVRPASSGPPGCPGDARPSGRLLAGGGQGPEPREGPVHGGEAARGPE).

Belongs to the G-protein coupled receptor 1 family.

It is found in the cell membrane. Receptor for the hormone galanin. Receptor for the hormone spexin-1. In Homo sapiens (Human), this protein is Galanin receptor type 3 (GALR3).